A 67-amino-acid polypeptide reads, in one-letter code: DNA-directed RNA polymerase subunit omega (67 aa).

Belongs to the RNA polymerase subunit omega family. In terms of assembly, the RNAP catalytic core consists of 2 alpha, 1 beta, 1 beta' and 1 omega subunit. When a sigma factor is associated with the core the holoenzyme is formed, which can initiate transcription.

It catalyses the reaction RNA(n) + a ribonucleoside 5'-triphosphate = RNA(n+1) + diphosphate. Its function is as follows. Promotes RNA polymerase assembly. Latches the N- and C-terminal regions of the beta' subunit thereby facilitating its interaction with the beta and alpha subunits. The chain is DNA-directed RNA polymerase subunit omega from Albidiferax ferrireducens (strain ATCC BAA-621 / DSM 15236 / T118) (Rhodoferax ferrireducens).